A 218-amino-acid chain; its full sequence is Probable nicotinate-nucleotide adenylyltransferase (218 aa).

Belongs to the NadD family.

It carries out the reaction nicotinate beta-D-ribonucleotide + ATP + H(+) = deamido-NAD(+) + diphosphate. Its pathway is cofactor biosynthesis; NAD(+) biosynthesis; deamido-NAD(+) from nicotinate D-ribonucleotide: step 1/1. Its function is as follows. Catalyzes the reversible adenylation of nicotinate mononucleotide (NaMN) to nicotinic acid adenine dinucleotide (NaAD). This is Probable nicotinate-nucleotide adenylyltransferase from Helicobacter hepaticus (strain ATCC 51449 / 3B1).